We begin with the raw amino-acid sequence, 105 residues long: Late embryogenesis abundant protein Lea5-D (105 aa).

Residues 48-67 (KVERRDAMKESSSSETRAYS) are disordered. The span at 57–67 (ESSSSETRAYS) shows a compositional bias: low complexity.

The protein belongs to the LEA type 3 family.

In Gossypium hirsutum (Upland cotton), this protein is Late embryogenesis abundant protein Lea5-D (LEA5-D).